A 70-amino-acid chain; its full sequence is Conotoxin ArMKLT2-0111 (70 aa).

The first 22 residues, 1-22 (MKLTCVLIIAVLFLTACQLTTG), serve as a signal peptide directing secretion. Residues 23 to 40 (EQKDHALRSTDKNSKLTR) constitute a propeptide that is removed on maturation. Pyrrolidone carboxylic acid is present on Gln41. 3 disulfide bridges follow: Cys42–Cys56, Cys49–Cys60, and Cys55–Cys67.

Belongs to the conotoxin O1 superfamily. As to expression, expressed by the venom duct.

It is found in the secreted. The protein is Conotoxin ArMKLT2-0111 of Conus arenatus (Sand-dusted cone).